The following is a 542-amino-acid chain: 1,3-beta-glucanosyltransferase gas1 (542 aa).

A signal peptide spans 1-19 (MKFSILSLAVAGLVGLAKA). Asn-35 carries an N-linked (GlcNAc...) asparagine glycan. A disulfide bridge connects residues Cys-70 and Cys-99. (1,3-beta-D-glucosyl)n is bound at residue Tyr-88. Asn-91 is a glycosylation site (N-linked (GlcNAc...) asparagine). (1,3-beta-D-glucosyl)n contacts are provided by Asn-156 and Glu-157. Glu-157 acts as the Proton donor in catalysis. An N-linked (GlcNAc...) asparagine glycan is attached at Asn-161. (1,3-beta-D-glucosyl)n-binding residues include Asp-198 and Arg-203. 5 disulfides stabilise this stretch: Cys-212-Cys-345, Cys-230-Cys-261, Cys-367-Cys-419, Cys-376-Cys-439, and Cys-395-Cys-400. N-linked (GlcNAc...) asparagine glycosylation occurs at Asn-249. The active-site Nucleophile is Glu-258. An N-linked (GlcNAc...) asparagine glycan is attached at Asn-279. Tyr-290 serves as a coordination point for (1,3-beta-D-glucosyl)n. N-linked (GlcNAc...) asparagine glycans are attached at residues Asn-406, Asn-484, Asn-502, and Asn-509. The interval 490–515 (MSTSYTSGSGSSNSSGSSSNSSSKSS) is disordered. Ser-516 carries GPI-anchor amidated serine lipidation. A propeptide spans 517 to 542 (GASSYNLNMVITFLSVVIGGTAVLFI) (removed in mature form).

Belongs to the glycosyl hydrolase 72 family. Post-translationally, the GPI-anchor is attached to the protein in the endoplasmic reticulum and serves to target the protein to the cell surface. There, the glucosamine-inositol phospholipid moiety is cleaved off and the GPI-modified mannoprotein is covalently attached via its lipidless GPI glycan remnant to the 1,6-beta-glucan of the outer cell wall layer.

The protein localises to the secreted. It is found in the cell wall. It localises to the membrane. In terms of biological role, splits internally a 1,3-beta-glucan molecule and transfers the newly generated reducing end (the donor) to the non-reducing end of another 1,3-beta-glucan molecule (the acceptor) forming a 1,3-beta linkage, resulting in the elongation of 1,3-beta-glucan chains in the cell wall. The chain is 1,3-beta-glucanosyltransferase gas1 (gas1) from Schizosaccharomyces pombe (strain 972 / ATCC 24843) (Fission yeast).